A 192-amino-acid chain; its full sequence is Putative molybdenum cofactor guanylyltransferase (192 aa).

Residues 8–10, Lys-21, Asp-67, and Asp-101 contribute to the GTP site; that span reads LAG. Asp-101 is a Mg(2+) binding site.

This sequence belongs to the MobA family. As to quaternary structure, monomer. Mg(2+) serves as cofactor.

The protein resides in the cytoplasm. The enzyme catalyses Mo-molybdopterin + GTP + H(+) = Mo-molybdopterin guanine dinucleotide + diphosphate. Transfers a GMP moiety from GTP to Mo-molybdopterin (Mo-MPT) cofactor (Moco or molybdenum cofactor) to form Mo-molybdopterin guanine dinucleotide (Mo-MGD) cofactor. The chain is Putative molybdenum cofactor guanylyltransferase from Neisseria meningitidis serogroup B (strain ATCC BAA-335 / MC58).